Here is a 745-residue protein sequence, read N- to C-terminus: Exocyst complex component 3 (745 aa).

Residue Lys-28 is modified to N6-acetyllysine.

It belongs to the SEC6 family. As to quaternary structure, the exocyst complex is composed of EXOC1, EXOC2, EXOC3, EXOC4, EXOC5, EXOC6, EXOC7 and EXOC8. Interacts with EXOC3L1. Interacts with BIRC6/bruce. Interacts with MYRIP. Interacts with SLC6A9. In terms of tissue distribution, expressed in epididymis (at protein level).

The protein localises to the cytoplasm. It is found in the perinuclear region. The protein resides in the cell projection. It localises to the growth cone. Its subcellular location is the midbody. The protein localises to the golgi apparatus. It is found in the neuron projection. Component of the exocyst complex involved in the docking of exocytic vesicles with fusion sites on the plasma membrane. The sequence is that of Exocyst complex component 3 (EXOC3) from Homo sapiens (Human).